The chain runs to 150 residues: Probable cyclic pyranopterin monophosphate synthase (150 aa).

Residues 68 to 70 (YCH) and 104 to 105 (ME) contribute to the substrate site. D119 is an active-site residue.

It belongs to the MoaC family. As to quaternary structure, homohexamer; trimer of dimers.

It carries out the reaction (8S)-3',8-cyclo-7,8-dihydroguanosine 5'-triphosphate = cyclic pyranopterin phosphate + diphosphate. Its pathway is cofactor biosynthesis; molybdopterin biosynthesis. Its function is as follows. Catalyzes the conversion of (8S)-3',8-cyclo-7,8-dihydroguanosine 5'-triphosphate to cyclic pyranopterin monophosphate (cPMP). This Thermoplasma volcanium (strain ATCC 51530 / DSM 4299 / JCM 9571 / NBRC 15438 / GSS1) protein is Probable cyclic pyranopterin monophosphate synthase.